We begin with the raw amino-acid sequence, 209 residues long: Octanoyltransferase (209 aa).

The BPL/LPL catalytic domain occupies 30 to 209 (DNEPEIVYLV…IQTEFNKIFK (180 aa)). Substrate is bound by residues 69 to 76 (RGGKFTFH), 143 to 145 (AIG), and 156 to 158 (GIA). Cys-174 functions as the Acyl-thioester intermediate in the catalytic mechanism.

This sequence belongs to the LipB family.

It localises to the cytoplasm. It catalyses the reaction octanoyl-[ACP] + L-lysyl-[protein] = N(6)-octanoyl-L-lysyl-[protein] + holo-[ACP] + H(+). It functions in the pathway protein modification; protein lipoylation via endogenous pathway; protein N(6)-(lipoyl)lysine from octanoyl-[acyl-carrier-protein]: step 1/2. Catalyzes the transfer of endogenously produced octanoic acid from octanoyl-acyl-carrier-protein onto the lipoyl domains of lipoate-dependent enzymes. Lipoyl-ACP can also act as a substrate although octanoyl-ACP is likely to be the physiological substrate. The polypeptide is Octanoyltransferase (Rickettsia prowazekii (strain Madrid E)).